A 351-amino-acid polypeptide reads, in one-letter code: Protein Wnt-8a (351 aa).

The signal sequence occupies residues 1-24; the sequence is MGNLFMLWAALGICCAAFSASAWS. The cysteines at positions 54 and 65 are disulfide-linked. N-linked (GlcNAc...) asparagine glycosylation is present at N103. 10 disulfides stabilise this stretch: C104–C112, C114–C132, C180–C194, C182–C189, C259–C297, C275–C290, C294–C336, C312–C327, C314–C324, and C319–C320. Residue S186 is the site of O-palmitoleoyl serine attachment. N-linked (GlcNAc...) asparagine glycans are attached at residues N262 and N281.

This sequence belongs to the Wnt family. Forms a soluble 1:1 complex with AFM; this prevents oligomerization and is required for prolonged biological activity. The complex with AFM may represent the physiological form in body fluids. In terms of processing, palmitoleoylation is required for efficient binding to frizzled receptors. Depalmitoleoylation leads to Wnt signaling pathway inhibition. Proteolytic processing by TIKI1 and TIKI2 promotes oxidation and formation of large disulfide-bond oligomers, leading to inactivation of WNT8A.

The protein localises to the secreted. It localises to the extracellular space. Its subcellular location is the extracellular matrix. Functionally, ligand for members of the frizzled family of seven transmembrane receptors. Plays a role in embryonic patterning. This chain is Protein Wnt-8a (WNT8A), found in Homo sapiens (Human).